We begin with the raw amino-acid sequence, 583 residues long: Membrane-bound O-acyltransferase gup1 (583 aa).

Residues 1–52 (MLRLFRFDVLETSTKDTERPNSKSSRLSSTSGSSHPSSSSRLTVRSAVPEKS) are Extracellular-facing. Positions 15-42 (KDTERPNSKSSRLSSTSGSSHPSSSSRL) are disordered. The span at 22 to 40 (SKSSRLSSTSGSSHPSSSS) shows a compositional bias: low complexity. The helical transmembrane segment at 53–73 (AFGSIEFIFYFSVILSILTIA) threads the bilayer. At 74-119 (CFKIHYVSSPKHPNYKNIEKYLKPGWLFGQKVDSADFQYSAFRENM) the chain is on the cytoplasmic side. The chain crosses the membrane as a helical span at residues 120–140 (PILLLVIIVYNFLWRLVKLVF). Topologically, residues 141 to 159 (TKNTNDELAIKNNYRLCFS) are extracellular. A helical transmembrane segment spans residues 160–180 (LLFALLVYGTGVIYVLTIALI). The Cytoplasmic segment spans residues 181-191 (NYLISKSLKNS). A helical transmembrane segment spans residues 192–212 (IFNPLLTWTLDISVVFFKEYF). Residues 213-298 (AYCKFSSLHP…SCLDEDYNLK (86 aa)) lie on the Extracellular side of the membrane. The helical transmembrane segment at 299–319 (NFLTYIFYAPLYLAGPIISFN) threads the bilayer. Over 320 to 343 (NFMSQMKYPTVSTLKYRNLLYAIR) the chain is Cytoplasmic. The chain crosses the membrane as a helical span at residues 344–364 (FLVCVLTMEFLLHYAYVTAIS). At 365 to 373 (KDGNWNQYS) the chain is on the extracellular side. A helical membrane pass occupies residues 374–394 (AVESAMISFIVLFMTWLKLLI). Residues 395–444 (PWRLFRLWSLIDDIEPPENIVRCMCNNYSAVGFWRAWHRSFNRWLIRYIY) lie on the Cytoplasmic side of the membrane. A run of 2 helical transmembrane segments spans residues 445-465 (VPLG…TFVA) and 466-486 (LWHD…LFIL). H468 is an active-site residue. Residues 487–512 (PERLCCFMSRRTGLTKHPYYRYISGF) lie on the Cytoplasmic side of the membrane. The helical transmembrane segment at 513–533 (GAALNIYFMIICNLIGFAVGI) threads the bilayer. Residues 534 to 549 (DGIKNVLVSFFLTLKG) lie on the Extracellular side of the membrane. The helical transmembrane segment at 550 to 570 (AMSAIAAFIMFFSAVQIMFQI) threads the bilayer. Topologically, residues 571–583 (RVNEEEEGINLRC) are cytoplasmic.

Belongs to the membrane-bound acyltransferase family.

The protein localises to the cell membrane. It is found in the endoplasmic reticulum membrane. Its subcellular location is the mitochondrion membrane. Membrane-bound O-acyltransferase involved in the remodeling of glycosylphosphatidylinositol (GPI) anchors. Acts only on GPI-anchored proteins, but not on free GPI lipids. Also involved in lipid metabolism, having profound effects on sphingolipid-sterol-ordered domains integrity and assembly. Involved in cell integrity and apoptosis. This Schizosaccharomyces pombe (strain 972 / ATCC 24843) (Fission yeast) protein is Membrane-bound O-acyltransferase gup1 (gup1).